The chain runs to 113 residues: Iron-sulfur cluster insertion protein ErpA (113 aa).

3 residues coordinate iron-sulfur cluster: Cys-41, Cys-105, and Cys-107.

It belongs to the HesB/IscA family. As to quaternary structure, homodimer. The cofactor is iron-sulfur cluster.

Its function is as follows. Required for insertion of 4Fe-4S clusters for at least IspG. The polypeptide is Iron-sulfur cluster insertion protein ErpA (Hydrogenovibrio crunogenus (strain DSM 25203 / XCL-2) (Thiomicrospira crunogena)).